We begin with the raw amino-acid sequence, 524 residues long: Beta-glucosidase 21 (524 aa).

Residues 1 to 24 (MALQKFPLMGLLLLLTILVSVTTA) form the signal peptide. Gln55 is an a beta-D-glucoside binding site. N-linked (GlcNAc...) asparagine glycosylation is present at Asn61. A beta-D-glucoside contacts are provided by residues His158 and 203–204 (NE). The Proton donor role is filled by Glu204. Cys223 and Cys230 are disulfide-bonded. Residues Tyr346, Glu418, Trp468, 475-476 (EW), and Phe484 each bind a beta-D-glucoside. The Nucleophile role is filled by Glu418. N-linked (GlcNAc...) asparagine glycosylation is present at Asn494. Positions 521 to 524 (RDEL) match the Prevents secretion from ER motif.

The protein belongs to the glycosyl hydrolase 1 family. As to quaternary structure, component of the PYK10 complex, at least composed of PYK10/BGLU23, BGLU21, BGLU22, JAL22, JAL23, PBP1/JAL30, PBP2/JAL31, JAL32, JAL33, JAL34, JAL35, GLL22 and GLL23. Expressed exclusively in roots.

It is found in the endoplasmic reticulum lumen. It catalyses the reaction Hydrolysis of terminal, non-reducing beta-D-glucosyl residues with release of beta-D-glucose.. Activated upon binding to PBP1 or PBP2. In terms of biological role, beta-D-glucosidase active on scopolin &gt;&gt; esculin &gt;&gt; 4-MU-glucoside &gt; DIMBOA-glucoside. No activity with pNP-glucoside, oNP-glucoside and sinigrin as substrates. This Arabidopsis thaliana (Mouse-ear cress) protein is Beta-glucosidase 21.